The primary structure comprises 61 residues: Temporin-SN4 (61 aa).

An N-terminal signal peptide occupies residues 1-22 (MFTLKKTLLLLFFLGTINLSLC). The propeptide at 23 to 44 (EEERNAEEERRDGDDEMDVEVK) is removed in mature form. Residue Lys-61 is modified to Lysine amide.

This sequence belongs to the frog skin active peptide (FSAP) family. Temporin subfamily. Expressed by the skin glands.

It localises to the secreted. In terms of biological role, antimicrobial peptide. Active against some Gram-positive and Gram-negative bacterial strains. Active against fungus C.glabrata 090902 but not against C.albicans ATCC 12231. Shows weak hemolytic activity against human erythrocytes. The chain is Temporin-SN4 from Sylvirana spinulosa (Fine-spined frog).